Here is a 418-residue protein sequence, read N- to C-terminus: Light-independent protochlorophyllide reductase subunit N (418 aa).

Positions 17, 42, and 103 each coordinate [4Fe-4S] cluster.

It belongs to the BchN/ChlN family. As to quaternary structure, protochlorophyllide reductase is composed of three subunits; ChlL, ChlN and ChlB. Forms a heterotetramer of two ChlB and two ChlN subunits. [4Fe-4S] cluster is required as a cofactor.

It carries out the reaction chlorophyllide a + oxidized 2[4Fe-4S]-[ferredoxin] + 2 ADP + 2 phosphate = protochlorophyllide a + reduced 2[4Fe-4S]-[ferredoxin] + 2 ATP + 2 H2O. It functions in the pathway porphyrin-containing compound metabolism; chlorophyll biosynthesis (light-independent). Functionally, component of the dark-operative protochlorophyllide reductase (DPOR) that uses Mg-ATP and reduced ferredoxin to reduce ring D of protochlorophyllide (Pchlide) to form chlorophyllide a (Chlide). This reaction is light-independent. The NB-protein (ChlN-ChlB) is the catalytic component of the complex. The polypeptide is Light-independent protochlorophyllide reductase subunit N (Prochlorococcus marinus (strain MIT 9215)).